A 204-amino-acid polypeptide reads, in one-letter code: N-(5'-phosphoribosyl)anthranilate isomerase (204 aa).

Belongs to the TrpF family.

The enzyme catalyses N-(5-phospho-beta-D-ribosyl)anthranilate = 1-(2-carboxyphenylamino)-1-deoxy-D-ribulose 5-phosphate. It functions in the pathway amino-acid biosynthesis; L-tryptophan biosynthesis; L-tryptophan from chorismate: step 3/5. This chain is N-(5'-phosphoribosyl)anthranilate isomerase, found in Bacillus anthracis (strain A0248).